Consider the following 459-residue polypeptide: Exodeoxyribonuclease 7 large subunit (459 aa).

Belongs to the XseA family. As to quaternary structure, heterooligomer composed of large and small subunits.

Its subcellular location is the cytoplasm. The enzyme catalyses Exonucleolytic cleavage in either 5'- to 3'- or 3'- to 5'-direction to yield nucleoside 5'-phosphates.. Its function is as follows. Bidirectionally degrades single-stranded DNA into large acid-insoluble oligonucleotides, which are then degraded further into small acid-soluble oligonucleotides. The sequence is that of Exodeoxyribonuclease 7 large subunit from Pseudomonas putida (strain ATCC 47054 / DSM 6125 / CFBP 8728 / NCIMB 11950 / KT2440).